The chain runs to 369 residues: Anhydro-N-acetylmuramic acid kinase (369 aa).

Residue 12 to 19 (GTSMDGVD) participates in ATP binding.

It belongs to the anhydro-N-acetylmuramic acid kinase family.

It carries out the reaction 1,6-anhydro-N-acetyl-beta-muramate + ATP + H2O = N-acetyl-D-muramate 6-phosphate + ADP + H(+). The protein operates within amino-sugar metabolism; 1,6-anhydro-N-acetylmuramate degradation. Its pathway is cell wall biogenesis; peptidoglycan recycling. Functionally, catalyzes the specific phosphorylation of 1,6-anhydro-N-acetylmuramic acid (anhMurNAc) with the simultaneous cleavage of the 1,6-anhydro ring, generating MurNAc-6-P. Is required for the utilization of anhMurNAc either imported from the medium or derived from its own cell wall murein, and thus plays a role in cell wall recycling. This Shewanella sp. (strain MR-7) protein is Anhydro-N-acetylmuramic acid kinase.